The following is a 351-amino-acid chain: Transcription factor Atoh1 (351 aa).

2 disordered regions span residues 16 to 39 (LGDH…PATL) and 89 to 116 (EAAA…SKSP). Positions 26–36 (HHVPPLTPQPP) are enriched in pro residues. The bHLH domain maps to 156-208 (QRRLAANARERRRMHGLNHAFDQLRNVIPSFNNDKKLSKYETLQMAQIYINAL). 2 disordered regions span residues 244-278 (GAGA…GPAS) and 308-351 (LSPS…DEAS). The span at 247 to 256 (ASAVAGAQPA) shows a compositional bias: low complexity. Residues 258–268 (GGGPRPTPPGP) show a composition bias toward pro residues. Positions 332–351 (HRSDGEFSPHSHYSDSDEAS) are enriched in basic and acidic residues.

Efficient DNA binding requires dimerization with another bHLH protein. In terms of tissue distribution, developing nervous system, and in adult epithelial cells of the gastrointestinal tract.

It localises to the nucleus. Its function is as follows. Transcriptional regulator. Activates E box-dependent transcription in collaboration with TCF3/E47, but the activity is completely antagonized by the negative regulator of neurogenesis HES1. Plays a role in the differentiation of subsets of neural cells by activating E box-dependent transcription. This Mus musculus (Mouse) protein is Transcription factor Atoh1.